The sequence spans 120 residues: Large ribosomal subunit protein bL20 (120 aa).

It belongs to the bacterial ribosomal protein bL20 family.

Functionally, binds directly to 23S ribosomal RNA and is necessary for the in vitro assembly process of the 50S ribosomal subunit. It is not involved in the protein synthesizing functions of that subunit. This chain is Large ribosomal subunit protein bL20, found in Desulforudis audaxviator (strain MP104C).